Reading from the N-terminus, the 170-residue chain is IMPACT family member YDL177C (170 aa).

Residues 79–98 (KKKGNKANKSNNSHVNKSRN) form a disordered region.

Belongs to the IMPACT family.

This is IMPACT family member YDL177C from Saccharomyces cerevisiae (strain ATCC 204508 / S288c) (Baker's yeast).